Reading from the N-terminus, the 342-residue chain is N-acetyl-gamma-glutamyl-phosphate reductase (342 aa).

C149 is a catalytic residue.

It belongs to the NAGSA dehydrogenase family. Type 1 subfamily.

Its subcellular location is the cytoplasm. The catalysed reaction is N-acetyl-L-glutamate 5-semialdehyde + phosphate + NADP(+) = N-acetyl-L-glutamyl 5-phosphate + NADPH + H(+). Its pathway is amino-acid biosynthesis; L-arginine biosynthesis; N(2)-acetyl-L-ornithine from L-glutamate: step 3/4. Functionally, catalyzes the NADPH-dependent reduction of N-acetyl-5-glutamyl phosphate to yield N-acetyl-L-glutamate 5-semialdehyde. In Ruegeria pomeroyi (strain ATCC 700808 / DSM 15171 / DSS-3) (Silicibacter pomeroyi), this protein is N-acetyl-gamma-glutamyl-phosphate reductase.